Consider the following 703-residue polypeptide: Arylphorin subunit beta (703 aa).

A signal peptide spans 1–16 (MKTVIILAGLVALALG). Asn-72 and Asn-211 each carry an N-linked (GlcNAc...) asparagine glycan.

Belongs to the hemocyanin family. Arylphorin is a hexamer of subunits alpha and beta. In terms of tissue distribution, fat body.

It localises to the secreted. The protein localises to the extracellular space. Arylphorin is a larval storage protein (LSP) which may serve as a storage protein used primarily as a source of aromatic amino acids for protein synthesis during metamorphosis. It is a constituent of the sclerotizing system of the cuticle, and serves as a carrier for ecdysteroid hormone. In Manduca sexta (Tobacco hawkmoth), this protein is Arylphorin subunit beta.